The sequence spans 772 residues: RNA exonuclease 5 (772 aa).

A compositionally biased stretch (basic and acidic residues) spans 1-10 (MEPEREGTER). Residues 1–26 (MEPEREGTERHPRKVRKRRQAPNKLV) form a disordered region. The span at 11–21 (HPRKVRKRRQA) shows a compositional bias: basic residues. Positions 228-376 (LFGLDCEMCL…EDARIILELA (149 aa)) constitute an Exonuclease domain. RRM domains lie at 505–579 (STVY…RPVT) and 600–679 (GSIY…RHLH).

The sequence is that of RNA exonuclease 5 (REXO5) from Macaca fascicularis (Crab-eating macaque).